A 462-amino-acid polypeptide reads, in one-letter code: 3-isopropylmalate dehydratase large subunit (462 aa).

The [4Fe-4S] cluster site is built by Cys-337, Cys-397, and Cys-400.

Belongs to the aconitase/IPM isomerase family. LeuC type 1 subfamily. Heterodimer of LeuC and LeuD. The cofactor is [4Fe-4S] cluster.

It catalyses the reaction (2R,3S)-3-isopropylmalate = (2S)-2-isopropylmalate. Its pathway is amino-acid biosynthesis; L-leucine biosynthesis; L-leucine from 3-methyl-2-oxobutanoate: step 2/4. Catalyzes the isomerization between 2-isopropylmalate and 3-isopropylmalate, via the formation of 2-isopropylmaleate. The chain is 3-isopropylmalate dehydratase large subunit from Listeria welshimeri serovar 6b (strain ATCC 35897 / DSM 20650 / CCUG 15529 / CIP 8149 / NCTC 11857 / SLCC 5334 / V8).